Here is an 857-residue protein sequence, read N- to C-terminus: Autoinducer 2 sensor kinase/phosphatase LuxQ (857 aa).

Transmembrane regions (helical) follow at residues Ile-20–Ser-40 and Leu-283–Ile-303. A Histidine kinase domain is found at Lys-490 to Lys-712. At His-493 the chain carries Phosphohistidine; by autocatalysis. The region spanning Lys-735–Lys-850 is the Response regulatory domain. At Asp-784 the chain carries 4-aspartylphosphate.

Binds the complex formed by the autoinducer and LuxP.

The protein resides in the cell inner membrane. It carries out the reaction ATP + protein L-histidine = ADP + protein N-phospho-L-histidine.. In terms of biological role, at low cell density, in absence of autoinducer has a kinase activity, and autophosphorylates on a histidine residue. The phosphoryl group is then transferred to an aspartate residue in the response regulator domain. The phosphoryl group is transferred to LuxU, and ultimately to LuxO. At high cell density, in the presence of autoinducer, the kinase activity is inactivated, and the response regulator domain has a phosphatase activity. This is Autoinducer 2 sensor kinase/phosphatase LuxQ (luxQ) from Vibrio vulnificus (strain CMCP6).